The primary structure comprises 514 residues: Probable lipid II flippase MurJ (514 aa).

14 helical membrane passes run 3 to 23, 25 to 45, 92 to 112, 130 to 150, 157 to 177, 186 to 206, 245 to 265, 271 to 291, 315 to 335, 354 to 374, 386 to 406, 409 to 429, 448 to 468, and 481 to 501; these read ILKSLISVGIMTLISRIFGFF, DVLIAHIFGASMFTDAFFIAF, ILVLTTFVILGIIFSDYIIFI, LLKIMFPYILFISLSSLCSSI, FFIPSLSSSLLNISIIVFSFF, IISLAWSVMIGGFFQLFYQFP, ISLIFNTIFSSLLHSGSISWI, LIEFPIGIIGVSLSTILFTSF, LILSLPISVILFMFSKPLVII, LELYSFGLVSFILVKILVSAF, ISILTLFLTQLMNPFLIFYFQ, GLALSCSIASWINFFLLYWKL, LLIAVLVMTFFLIFMLYFIPS, and LFTILSISGIVYLIALHFLGI.

Belongs to the MurJ/MviN family.

The protein resides in the cell inner membrane. It participates in cell wall biogenesis; peptidoglycan biosynthesis. Involved in peptidoglycan biosynthesis. Transports lipid-linked peptidoglycan precursors from the inner to the outer leaflet of the cytoplasmic membrane. This Buchnera aphidicola subsp. Schizaphis graminum (strain Sg) protein is Probable lipid II flippase MurJ.